Reading from the N-terminus, the 792-residue chain is Ribonucleoside-diphosphate reductase large subunit (792 aa).

Residues 1 to 92 (MHVIKRDGRQ…VSNLHKETKK (92 aa)) enclose the ATP-cone domain. Residues 5–6 (KR), 11–17 (ERVMFDK), T53, and D57 contribute to the ATP site. K17 is modified (N6-acetyllysine). Residues S202 and S217 each contribute to the GDP site. C218 and C444 are disulfide-bonded. DTTP contacts are provided by residues 226-228 (DSI), K243, R256, and 263-264 (AG). K376 carries the post-translational modification N6-acetyllysine. Residue N427 coordinates GDP. The Proton acceptor role is filled by N427. Residue C429 is the Cysteine radical intermediate of the active site. GDP contacts are provided by residues E431 and 604–607 (TAST). E431 functions as the Proton acceptor in the catalytic mechanism. T751 carries the phosphothreonine modification.

This sequence belongs to the ribonucleoside diphosphate reductase large chain family. In terms of assembly, heterodimer of a large and a small subunit. Interacts with RRM2B. Interacts with AHCYL1 which inhibits its activity.

The protein resides in the cytoplasm. It carries out the reaction a 2'-deoxyribonucleoside 5'-diphosphate + [thioredoxin]-disulfide + H2O = a ribonucleoside 5'-diphosphate + [thioredoxin]-dithiol. Under complex allosteric control mediated by deoxynucleoside triphosphates and ATP binding to separate specificity and activation sites on the M1 subunit. The type of nucleotide bound at the specificity site determines substrate preference. It seems probable that ATP makes the enzyme reduce CDP and UDP, dGTP favors ADP reduction and dTTP favors GDP reduction. Stimulated by ATP and inhibited by dATP binding to the activity site, the dATP inhibition is mediated by AHCYL1 which stabilizes dATP in the site. Functionally, provides the precursors necessary for DNA synthesis. Catalyzes the biosynthesis of deoxyribonucleotides from the corresponding ribonucleotides. This chain is Ribonucleoside-diphosphate reductase large subunit (Rrm1), found in Mus musculus (Mouse).